We begin with the raw amino-acid sequence, 256 residues long: HTH-type transcriptional regulator PrtR (256 aa).

Positions 16-69 constitute an HTH cro/C1-type domain; that stretch reads LKQAMAMRNLKQETLAEAAGVSQNTIHKLTSGKAQSTRKLIEIAAALGVSPVWL. The H-T-H motif DNA-binding region spans 27–46; that stretch reads QETLAEAAGVSQNTIHKLTS.

Its function is as follows. Represses the promoter activity of the prtN gene. The sequence is that of HTH-type transcriptional regulator PrtR (prtR) from Pseudomonas aeruginosa (strain ATCC 15692 / DSM 22644 / CIP 104116 / JCM 14847 / LMG 12228 / 1C / PRS 101 / PAO1).